A 258-amino-acid polypeptide reads, in one-letter code: UPF0246 protein mma_1385 (258 aa).

It belongs to the UPF0246 family.

The polypeptide is UPF0246 protein mma_1385 (Janthinobacterium sp. (strain Marseille) (Minibacterium massiliensis)).